The following is a 684-amino-acid chain: Glycine--tRNA ligase beta subunit (684 aa).

It belongs to the class-II aminoacyl-tRNA synthetase family. As to quaternary structure, tetramer of two alpha and two beta subunits.

The protein localises to the cytoplasm. The catalysed reaction is tRNA(Gly) + glycine + ATP = glycyl-tRNA(Gly) + AMP + diphosphate. The polypeptide is Glycine--tRNA ligase beta subunit (Pseudomonas fluorescens (strain ATCC BAA-477 / NRRL B-23932 / Pf-5)).